The following is a 515-amino-acid chain: Heavy metal-associated isoprenylated plant protein 41 (515 aa).

Positions 376–444 (KQRIVLKMDM…KVCMTTIITV (69 aa)) constitute an HMA domain. Cys-512 is modified (cysteine methyl ester). Cys-512 is lipidated: S-farnesyl cysteine. A propeptide spans 513–515 (RIL) (removed in mature form).

This sequence belongs to the HIPP family.

Its function is as follows. Heavy-metal-binding protein. In Arabidopsis thaliana (Mouse-ear cress), this protein is Heavy metal-associated isoprenylated plant protein 41.